Here is a 185-residue protein sequence, read N- to C-terminus: Ribose 1,5-bisphosphate phosphokinase PhnN (185 aa).

It belongs to the ribose 1,5-bisphosphokinase family.

It carries out the reaction alpha-D-ribose 1,5-bisphosphate + ATP = 5-phospho-alpha-D-ribose 1-diphosphate + ADP. The protein operates within metabolic intermediate biosynthesis; 5-phospho-alpha-D-ribose 1-diphosphate biosynthesis; 5-phospho-alpha-D-ribose 1-diphosphate from D-ribose 5-phosphate (route II): step 3/3. In terms of biological role, catalyzes the phosphorylation of ribose 1,5-bisphosphate to 5-phospho-D-ribosyl alpha-1-diphosphate (PRPP). In Escherichia coli (strain SMS-3-5 / SECEC), this protein is Ribose 1,5-bisphosphate phosphokinase PhnN.